The primary structure comprises 518 residues: Arrestin-related trafficking adapter 10 (518 aa).

Residue K118 forms a Glycyl lysine isopeptide (Lys-Gly) (interchain with G-Cter in ubiquitin) linkage.

Belongs to the ART10 family. As to quaternary structure, interacts with RSP5. Post-translationally, ubiquitinated by RSP5.

It is found in the cytoplasm. Its function is as follows. May regulate endocytosis by recruiting RSP5 ubiquitin ligase activity to specific plasma membrane proteins in response to extracellular stimuli. This is Arrestin-related trafficking adapter 10 (ART10) from Saccharomyces cerevisiae (strain RM11-1a) (Baker's yeast).